The sequence spans 144 residues: uncharacterized protein (144 aa).

N14 and N15 each carry an N-linked (GlcNAc...) asparagine glycan. Residues 90-110 traverse the membrane as a helical segment; it reads FSWFIFGLFIACLLLCITLVL. The disordered stretch occupies residues 120–144; sequence NKATEVVPSSNIDDEEKQLSLSDMI.

The protein localises to the membrane. This is an uncharacterized protein from Saccharomyces cerevisiae (strain ATCC 204508 / S288c) (Baker's yeast).